The chain runs to 67 residues: Large ribosomal subunit protein uL29 (67 aa).

It belongs to the universal ribosomal protein uL29 family.

This chain is Large ribosomal subunit protein uL29, found in Zymomonas mobilis subsp. mobilis (strain ATCC 31821 / ZM4 / CP4).